The primary structure comprises 95 residues: Putative pterin-4-alpha-carbinolamine dehydratase (95 aa).

Belongs to the pterin-4-alpha-carbinolamine dehydratase family.

It carries out the reaction (4aS,6R)-4a-hydroxy-L-erythro-5,6,7,8-tetrahydrobiopterin = (6R)-L-erythro-6,7-dihydrobiopterin + H2O. This Solibacter usitatus (strain Ellin6076) protein is Putative pterin-4-alpha-carbinolamine dehydratase.